The chain runs to 372 residues: Pre-small/secreted glycoprotein (372 aa).

Positions 1-32 (MEGLSLLQLPRDKFRKSSFFVWVIILFQKAFS) are cleaved as a signal peptide. Asn40 carries N-linked (GlcNAc...) asparagine; by host glycosylation. 2 cysteine pairs are disulfide-bonded: Cys108-Cys135 and Cys121-Cys147. N-linked (GlcNAc...) asparagine; by host glycans are attached at residues Asn204, Asn208, Asn238, Asn257, and Asn268. Positions 320–340 (MRHRRELQREESPTGPPGSIR) are disordered.

The protein belongs to the filoviruses glycoprotein family. In terms of assembly, homodimer; disulfide-linked. The homodimers are linked by two disulfide bonds in a parallel orientation. Monomer. Post-translationally, this precursor is processed into mature sGP and delta-peptide by host furin or furin-like proteases. The cleavage site corresponds to the furin optimal cleavage sequence [KR]-X-[KR]-R. In terms of processing, N-glycosylated. O-glycosylated.

It is found in the secreted. Its function is as follows. Seems to possess an anti-inflammatory activity as it can reverse the barrier-decreasing effects of TNF alpha. Might therefore contribute to the lack of inflammatory reaction seen during infection in spite the of extensive necrosis and massive virus production. Does not seem to be involved in activation of primary macrophages. Does not seem to interact specifically with neutrophils. Viroporin that permeabilizes mammalian cell plasma membranes. It acts by altering permeation of ionic compounds and small molecules. This activity may lead to viral enterotoxic activity. This chain is Pre-small/secreted glycoprotein (GP), found in Sudan ebolavirus (strain Boniface-76) (SEBOV).